Consider the following 132-residue polypeptide: Ribonuclease P protein component (132 aa).

Belongs to the RnpA family. Consists of a catalytic RNA component (M1 or rnpB) and a protein subunit.

The catalysed reaction is Endonucleolytic cleavage of RNA, removing 5'-extranucleotides from tRNA precursor.. Functionally, RNaseP catalyzes the removal of the 5'-leader sequence from pre-tRNA to produce the mature 5'-terminus. It can also cleave other RNA substrates such as 4.5S RNA. The protein component plays an auxiliary but essential role in vivo by binding to the 5'-leader sequence and broadening the substrate specificity of the ribozyme. This Marinobacter nauticus (strain ATCC 700491 / DSM 11845 / VT8) (Marinobacter aquaeolei) protein is Ribonuclease P protein component.